Reading from the N-terminus, the 436-residue chain is tRNA(Ile)-lysidine synthase (436 aa).

An ATP-binding site is contributed by 27–32; the sequence is SGGVDS.

This sequence belongs to the tRNA(Ile)-lysidine synthase family.

It is found in the cytoplasm. The enzyme catalyses cytidine(34) in tRNA(Ile2) + L-lysine + ATP = lysidine(34) in tRNA(Ile2) + AMP + diphosphate + H(+). Functionally, ligates lysine onto the cytidine present at position 34 of the AUA codon-specific tRNA(Ile) that contains the anticodon CAU, in an ATP-dependent manner. Cytidine is converted to lysidine, thus changing the amino acid specificity of the tRNA from methionine to isoleucine. The sequence is that of tRNA(Ile)-lysidine synthase from Vibrio vulnificus (strain CMCP6).